A 474-amino-acid chain; its full sequence is UDP glycosyltransferase 9 (474 aa).

Residues serine 296, 349–350, 367–375, and 389–392 each bind UDP-alpha-D-glucose; these read WC, HCGWNSTLE, and WADQ.

Belongs to the UDP-glycosyltransferase family.

The protein is UDP glycosyltransferase 9 of Catharanthus roseus (Madagascar periwinkle).